We begin with the raw amino-acid sequence, 392 residues long: Heat-inducible transcription repressor HrcA (392 aa).

It belongs to the HrcA family.

Its function is as follows. Negative regulator of class I heat shock genes (grpE-dnaK-dnaJ and groELS operons). Prevents heat-shock induction of these operons. This is Heat-inducible transcription repressor HrcA from Chlamydia trachomatis serovar A (strain ATCC VR-571B / DSM 19440 / HAR-13).